Reading from the N-terminus, the 24-residue chain is Small ribosomal subunit protein uS19c (24 aa).

Belongs to the universal ribosomal protein uS19 family.

The protein localises to the plastid. The protein resides in the chloroplast. In terms of biological role, protein S19 forms a complex with S13 that binds strongly to the 16S ribosomal RNA. The chain is Small ribosomal subunit protein uS19c (rps19) from Petunia hybrida (Petunia).